Here is a 239-residue protein sequence, read N- to C-terminus: Type III effector protein HopBA1 (239 aa).

Residues 1–20 (MLNRISSSSPTSYVSSGSSS) show a composition bias toward low complexity. The interval 1-31 (MLNRISSSSPTSYVSSGSSSAGINPSINVRP) is disordered.

Its subcellular location is the secreted. The protein localises to the host cell. Functionally, virulence factor recognized by the A.thaliana disease resistance protein RBA1, which triggers plant cell death. HopBA1 enhances RBA1 self-association, which is necessary for ectopic autoactivation of host cell death. The sequence is that of Type III effector protein HopBA1 from Pseudomonas syringae pv. aptata.